The chain runs to 171 residues: uncharacterized protein (171 aa).

The 134-residue stretch at 33–166 (AISIATNLYR…LTGLLRKVAD (134 aa)) folds into the HTH marR-type domain. The H-T-H motif DNA-binding region spans 80-103 (TRKIAELSGISTATASNVIKTLEK).

This is an uncharacterized protein from Bacillus subtilis (strain 168).